We begin with the raw amino-acid sequence, 459 residues long: Fibrinogen C domain-containing protein 1 (459 aa).

Positions 1-22 (MVHERWKTVGSASQLEDRPRDK) are disordered. Topologically, residues 1–33 (MVHERWKTVGSASQLEDRPRDKPQRASCSYVLC) are cytoplasmic. The helical; Signal-anchor for type II membrane protein transmembrane segment at 34–54 (TVLLSLAVLLAVAVTGVVLFL) threads the bilayer. Over 55-459 (NHTHTPGTAP…MKIRPVREDR (405 aa)) the chain is Extracellular. The Fibrinogen C-terminal domain maps to 233 to 456 (CANGSRPRDC…FSEMKIRPVR (224 aa)). Cys242 and Cys271 are joined by a disulfide. A glycan (N-linked (GlcNAc...) asparagine) is linked at Asn338. Ca(2+)-binding residues include Asp391 and Asp393. Cysteines 399 and 412 form a disulfide.

As to quaternary structure, homotetramer; disulfide-linked.

Its subcellular location is the membrane. Its function is as follows. Acetyl group-binding receptor which shows a high-affinity and calcium-dependent binding to acetylated structures such as chitin, some N-acetylated carbohydrates, and amino acids, but not to their non-acetylated counterparts. Can facilitate the endocytosis of acetylated components. The protein is Fibrinogen C domain-containing protein 1 (Fibcd1) of Mus musculus (Mouse).